A 598-amino-acid chain; its full sequence is Pentatricopeptide repeat-containing protein At1g09900 (598 aa).

PPR repeat units follow at residues 101–135 (EDVE…GNVP), 136–170 (DIIP…GAVP), 171–201 (DVIT…MSVS), 203–237 (DVVT…DCYP), 238–272 (DVIT…GCTP), 273–307 (DVVT…GCQP), 308–342 (NVIT…GFSP), 343–377 (SVVT…GCQP), 378–412 (NSLS…GCYP), 413–447 (DIVT…GCSP), 448–482 (VLIT…DLKP), 483–517 (DTIT…GIRP), 518–552 (NAVT…GCKP), and 553–587 (NETS…GLMK).

It belongs to the PPR family. P subfamily.

This Arabidopsis thaliana (Mouse-ear cress) protein is Pentatricopeptide repeat-containing protein At1g09900.